We begin with the raw amino-acid sequence, 402 residues long: NADH-quinone oxidoreductase subunit D (402 aa).

This sequence belongs to the complex I 49 kDa subunit family. NDH-1 is composed of 14 different subunits. Subunits NuoB, C, D, E, F, and G constitute the peripheral sector of the complex.

The protein resides in the cell inner membrane. The catalysed reaction is a quinone + NADH + 5 H(+)(in) = a quinol + NAD(+) + 4 H(+)(out). Functionally, NDH-1 shuttles electrons from NADH, via FMN and iron-sulfur (Fe-S) centers, to quinones in the respiratory chain. The immediate electron acceptor for the enzyme in this species is believed to be ubiquinone. Couples the redox reaction to proton translocation (for every two electrons transferred, four hydrogen ions are translocated across the cytoplasmic membrane), and thus conserves the redox energy in a proton gradient. The sequence is that of NADH-quinone oxidoreductase subunit D from Rhodopseudomonas palustris (strain ATCC BAA-98 / CGA009).